Consider the following 307-residue polypeptide: UDP-3-O-acyl-N-acetylglucosamine deacetylase (307 aa).

Residues His-78, His-241, and Asp-245 each coordinate Zn(2+). Catalysis depends on His-268, which acts as the Proton donor.

This sequence belongs to the LpxC family. Zn(2+) is required as a cofactor.

The catalysed reaction is a UDP-3-O-[(3R)-3-hydroxyacyl]-N-acetyl-alpha-D-glucosamine + H2O = a UDP-3-O-[(3R)-3-hydroxyacyl]-alpha-D-glucosamine + acetate. The protein operates within glycolipid biosynthesis; lipid IV(A) biosynthesis; lipid IV(A) from (3R)-3-hydroxytetradecanoyl-[acyl-carrier-protein] and UDP-N-acetyl-alpha-D-glucosamine: step 2/6. Catalyzes the hydrolysis of UDP-3-O-myristoyl-N-acetylglucosamine to form UDP-3-O-myristoylglucosamine and acetate, the committed step in lipid A biosynthesis. In Acidovorax ebreus (strain TPSY) (Diaphorobacter sp. (strain TPSY)), this protein is UDP-3-O-acyl-N-acetylglucosamine deacetylase.